The sequence spans 142 residues: Large ribosomal subunit protein uL13 (142 aa).

The protein belongs to the universal ribosomal protein uL13 family. Part of the 50S ribosomal subunit.

Its function is as follows. This protein is one of the early assembly proteins of the 50S ribosomal subunit, although it is not seen to bind rRNA by itself. It is important during the early stages of 50S assembly. The sequence is that of Large ribosomal subunit protein uL13 from Photorhabdus laumondii subsp. laumondii (strain DSM 15139 / CIP 105565 / TT01) (Photorhabdus luminescens subsp. laumondii).